Consider the following 413-residue polypeptide: Divalent metal cation transporter MntH (413 aa).

The Cytoplasmic portion of the chain corresponds to 1–19 (MTDNRVENSSGRAARKLRL). Residues 20–39 (ALMGPAFIAAIGYIDPGNFA) form a helical membrane-spanning segment. Residues 40 to 51 (TNIQAGASFGYQ) lie on the Periplasmic side of the membrane. Residues 52-71 (LLWVVVWANLMAMLIQILSA) traverse the membrane as a helical segment. The Cytoplasmic portion of the chain corresponds to 72 to 95 (KLGIATGKNLAEQIRDHYPRPVVW). Residues 96 to 118 (FYWVQAEIIAMATDLAEFIGAAI) traverse the membrane as a helical segment. The Periplasmic segment spans residues 119 to 125 (GFKLILG). The helical transmembrane segment at 126-145 (VSLLQGAVLTGIATFLILML) threads the bilayer. Residues 146-155 (QRRGQKPLEK) lie on the Cytoplasmic side of the membrane. A helical transmembrane segment spans residues 156–175 (VIGGLLLFVAAAYIVELFFS). The Periplasmic segment spans residues 176 to 196 (QPDMAQLGKGMVIPALPNPEA). A helical membrane pass occupies residues 197 to 220 (VFLAAGVLGATIMPHVIYLHSSLT). The Cytoplasmic segment spans residues 221–238 (QHLHGGTRQQRYSATKWD). The helical transmembrane segment at 239-258 (VAIAMTIAGFVNLAMMATAA) threads the bilayer. Topologically, residues 259 to 276 (AAFHFSGHTGIADLDQAY) are periplasmic. A helical membrane pass occupies residues 277-297 (LTLEPLLSHAAATVFGLSLVA). Topologically, residues 298-327 (AGLSSTVVGTLAGQVVMQGFVRFHIPLWVR) are cytoplasmic. The helical transmembrane segment at 328–344 (RTITMLPSFIVILMGLD) threads the bilayer. Residues 345 to 350 (PTRILV) are Periplasmic-facing. Residues 351 to 370 (MSQVLLSFGIALALVPLLIF) traverse the membrane as a helical segment. Over 371–387 (TSNATLMGELVNTRRVK) the chain is Cytoplasmic. A helical transmembrane segment spans residues 388 to 406 (QVGWIIVVLVVALNIWLLV). Topologically, residues 407 to 413 (GTVMGLS) are periplasmic.

The protein belongs to the NRAMP family.

It is found in the cell inner membrane. H(+)-stimulated, divalent metal cation uptake system. The protein is Divalent metal cation transporter MntH of Salmonella paratyphi C (strain RKS4594).